A 98-amino-acid polypeptide reads, in one-letter code: NADH-ubiquinone oxidoreductase chain 4L (98 aa).

A run of 3 helical transmembrane segments spans residues 1 to 21, 29 to 49, and 58 to 78; these read MTPV…GLAF, ALLC…LWAL, and VAPM…LALL.

The protein belongs to the complex I subunit 4L family.

It localises to the mitochondrion membrane. It carries out the reaction a ubiquinone + NADH + 5 H(+)(in) = a ubiquinol + NAD(+) + 4 H(+)(out). In terms of biological role, core subunit of the mitochondrial membrane respiratory chain NADH dehydrogenase (Complex I) which catalyzes electron transfer from NADH through the respiratory chain, using ubiquinone as an electron acceptor. Part of the enzyme membrane arm which is embedded in the lipid bilayer and involved in proton translocation. The polypeptide is NADH-ubiquinone oxidoreductase chain 4L (MT-ND4L) (Oncorhynchus clarkii (Cutthroat trout)).